Here is a 478-residue protein sequence, read N- to C-terminus: Adenosylhomocysteinase (478 aa).

Residues Thr57, Asp139, and Glu201 each contribute to the substrate site. Residue 202–204 (TTT) coordinates NAD(+). Residues Lys231 and Asp235 each coordinate substrate. NAD(+) is bound by residues Asn236, 265 to 270 (GYGDVG), Glu288, Asn323, 344 to 346 (IGH), and Asn392.

Belongs to the adenosylhomocysteinase family. NAD(+) serves as cofactor.

Its subcellular location is the cytoplasm. The catalysed reaction is S-adenosyl-L-homocysteine + H2O = L-homocysteine + adenosine. Its pathway is amino-acid biosynthesis; L-homocysteine biosynthesis; L-homocysteine from S-adenosyl-L-homocysteine: step 1/1. May play a key role in the regulation of the intracellular concentration of adenosylhomocysteine. The protein is Adenosylhomocysteinase of Corynebacterium efficiens (strain DSM 44549 / YS-314 / AJ 12310 / JCM 11189 / NBRC 100395).